The chain runs to 381 residues: E3 ubiquitin-protein ligase At1g63170 (381 aa).

The disordered stretch occupies residues 1 to 23 (MSRETTTEATPLILTDGGGGRRS). 2 helical membrane-spanning segments follow: residues 74–94 (VVVL…AVLV) and 107–127 (VWII…CVEY). The disordered stretch occupies residues 135-161 (RRDLSPRSSSSSSSSSSSMDEEEGLGL). Residues 140 to 152 (PRSSSSSSSSSSS) are compositionally biased toward low complexity. The stretch at 170-194 (LELGQLENENNSFAKHLESANTMIS) forms a coiled coil. A run of 3 helical transmembrane segments spans residues 189–209 (ANTM…SSGG), 224–244 (IVFL…ACVI), and 245–265 (GIAV…VAEQ). An RING-type; atypical zinc finger spans residues 325-366 (CCICLSAYEDETELRELPCGHHFHCGCVDKWLYINATCPLCK).

Its subcellular location is the membrane. It catalyses the reaction S-ubiquitinyl-[E2 ubiquitin-conjugating enzyme]-L-cysteine + [acceptor protein]-L-lysine = [E2 ubiquitin-conjugating enzyme]-L-cysteine + N(6)-ubiquitinyl-[acceptor protein]-L-lysine.. It functions in the pathway protein modification; protein ubiquitination. Functionally, mediates E2-dependent protein ubiquitination. The protein is E3 ubiquitin-protein ligase At1g63170 of Arabidopsis thaliana (Mouse-ear cress).